The sequence spans 162 residues: Transcription elongation factor GreA (162 aa).

Residues 45–74 adopt a coiled-coil conformation; the sequence is ENAEYEAAREKQAFIEGRIKELEDMTARAE.

The protein belongs to the GreA/GreB family.

In terms of biological role, necessary for efficient RNA polymerase transcription elongation past template-encoded arresting sites. The arresting sites in DNA have the property of trapping a certain fraction of elongating RNA polymerases that pass through, resulting in locked ternary complexes. Cleavage of the nascent transcript by cleavage factors such as GreA or GreB allows the resumption of elongation from the new 3'terminus. GreA releases sequences of 2 to 3 nucleotides. The chain is Transcription elongation factor GreA from Rickettsia typhi (strain ATCC VR-144 / Wilmington).